A 163-amino-acid chain; its full sequence is Transcription elongation factor GreB (163 aa).

It belongs to the GreA/GreB family. GreB subfamily.

Necessary for efficient RNA polymerase transcription elongation past template-encoded arresting sites. The arresting sites in DNA have the property of trapping a certain fraction of elongating RNA polymerases that pass through, resulting in locked ternary complexes. Cleavage of the nascent transcript by cleavage factors such as GreA or GreB allows the resumption of elongation from the new 3'terminus. GreB releases sequences of up to 9 nucleotides in length. The protein is Transcription elongation factor GreB of Vibrio parahaemolyticus serotype O3:K6 (strain RIMD 2210633).